We begin with the raw amino-acid sequence, 408 residues long: MKNIIILIINTGSSSLKFTLYEYQYQSEQILASGIIEKIKTTQAIIKIKFKNKFLELTNLNIKSHKKALKHLIKTLTNKKTKIINYLDQIQGIGHRIVHGGAKFKNSVIINQNVLNELKKISHLAPLHNPIAIKVIEEMFILFPNAKQVACFDTSWHQTMNQKAFLYATPYSWYKDYHIRKYGFHGLSYAYITKRTAIILNKNIEDLNLIILHLGNGASINAVQKGRSYDTSMGLTPLEGLVMGTRSGDIDPTIIPLMSKILKKTTKQIENILNKESGMLGISCKSNDLRDIWIESNNNEYNSKLAVEIMTYRIKKYIGSYLAALDFNIDAIIFTAGIGTSDYEIRKLSLQGFEKIGIKIDFQKNNLAIDKNTEYDISSNQSNIKILVIPTNEELTILEDTYDLIKDN.

N10 is a binding site for Mg(2+). Position 17 (K17) interacts with ATP. Substrate is bound at residue R96. D153 serves as the catalytic Proton donor/acceptor. ATP-binding positions include H213–G217 and D288–R290. E393 is a binding site for Mg(2+).

The protein belongs to the acetokinase family. As to quaternary structure, homodimer. Mg(2+) serves as cofactor. Requires Mn(2+) as cofactor.

It localises to the cytoplasm. It carries out the reaction acetate + ATP = acetyl phosphate + ADP. The protein operates within metabolic intermediate biosynthesis; acetyl-CoA biosynthesis; acetyl-CoA from acetate: step 1/2. Catalyzes the formation of acetyl phosphate from acetate and ATP. Can also catalyze the reverse reaction. The chain is Acetate kinase from Borrelia duttonii (strain Ly).